A 613-amino-acid chain; its full sequence is ADP-ribosylation factor-binding protein GGA2 (613 aa).

The VHS domain maps to 33–163; that stretch reads ATDPSMSEQD…MLKKQGIIKQ (131 aa). Residues 188–315 enclose the GAT domain; that stretch reads DEEKSKLLTR…GVLLYKQVME (128 aa). The segment at 316–483 is unstructured hinge; sequence GRVTFGNRVT…VFVPLESVKP (168 aa). 2 disordered regions span residues 389 to 414 and 435 to 466; these read GQNC…NPSA and SQKS…SPSS. The segment covering 399–414 has biased composition (polar residues); it reads PSSSTLPGGGVQNPSA. At serine 400 the chain carries Phosphoserine. In terms of domain architecture, GAE spans 484–605; the sequence is SSLPPLIVYD…SEVGEVKDFP (122 aa).

This sequence belongs to the GGA protein family. In terms of assembly, monomer. Interacts with NECAP1, TSG101, UBC and AFTPH/aftiphilin. Interacts with CNST. Interacts with GGA1 and GGA3. Binds to clathrin and activated ARFs, such as ARF1, ARF5 and ARF6. Binds RABEP1 and RABGEF1. Interacts with the type-I membrane proteins LRP3, M6PR/CD-MPR, IGF2R/CI-MPR and BACE1. Interacts (via N-terminal VHS domain) with SORL1/sorLA and SORT1 (via C-terminal cytosolic domain). Binds the accessory proteins CCDC91, P200, SYNRG, EPN4 and NECAP2. Interacts with ADRA2B. Interacts (via VHS domain) with PIK4B; the interaction is important for PIK4B location at the Golgi apparatus membrane. Ubiquitinated. Ubiquitously expressed.

It localises to the golgi apparatus. It is found in the trans-Golgi network membrane. The protein localises to the endosome membrane. The protein resides in the early endosome membrane. Its function is as follows. Plays a role in protein sorting and trafficking between the trans-Golgi network (TGN) and endosomes. Mediates the ARF-dependent recruitment of clathrin to the TGN and binds ubiquitinated proteins and membrane cargo molecules with a cytosolic acidic cluster-dileucine (DXXLL) motif. Mediates export of the GPCR receptor ADRA2B to the cell surface. Regulates retrograde transport of phosphorylated form of BACE1 from endosomes to the trans-Golgi network. The chain is ADP-ribosylation factor-binding protein GGA2 (GGA2) from Homo sapiens (Human).